We begin with the raw amino-acid sequence, 143 residues long: Mini-ribonuclease 3 (143 aa).

Aspartate 23 is an active-site residue.

It belongs to the MrnC RNase family. In terms of assembly, homodimer. The cofactor is Mg(2+).

It localises to the cytoplasm. Functionally, involved in correct processing of both the 5' and 3' ends of 23S rRNA precursor. Processes 30S rRNA precursor transcript even in absence of ribonuclease 3 (Rnc); Rnc processes 30S rRNA into smaller rRNA precursors. Cleaves more efficiently on assembled 50S ribosomal subunits. Cleavage is strongly stimulated by ribosomal protein L3 (RplC); 20-30% DMSO can replace RplC, suggesting RplC may alter rRNA conformation. The protein is Mini-ribonuclease 3 (mrnC) of Bacillus subtilis (strain 168).